A 451-amino-acid chain; its full sequence is Glycine--tRNA ligase (451 aa).

2 residues coordinate substrate: arginine 101 and glutamate 151. ATP is bound by residues 183–185 (RNE), 193–198 (FRTCEF), 267–268 (EL), and 312–315 (GLTR). 198 to 202 (FEQME) is a substrate binding site. 308-312 (ETSAG) provides a ligand contact to substrate.

It belongs to the class-II aminoacyl-tRNA synthetase family. In terms of assembly, homodimer.

The protein localises to the cytoplasm. It catalyses the reaction tRNA(Gly) + glycine + ATP = glycyl-tRNA(Gly) + AMP + diphosphate. Catalyzes the attachment of glycine to tRNA(Gly). The sequence is that of Glycine--tRNA ligase from Treponema denticola (strain ATCC 35405 / DSM 14222 / CIP 103919 / JCM 8153 / KCTC 15104).